We begin with the raw amino-acid sequence, 89 residues long: Small ribosomal subunit protein uS15 (89 aa).

It belongs to the universal ribosomal protein uS15 family. As to quaternary structure, part of the 30S ribosomal subunit. Forms a bridge to the 50S subunit in the 70S ribosome, contacting the 23S rRNA.

Functionally, one of the primary rRNA binding proteins, it binds directly to 16S rRNA where it helps nucleate assembly of the platform of the 30S subunit by binding and bridging several RNA helices of the 16S rRNA. Forms an intersubunit bridge (bridge B4) with the 23S rRNA of the 50S subunit in the ribosome. The protein is Small ribosomal subunit protein uS15 of Nitrosomonas eutropha (strain DSM 101675 / C91 / Nm57).